Consider the following 400-residue polypeptide: S-adenosylmethionine synthase (400 aa).

Gly-136–Asp-141 is an ATP binding site.

This sequence belongs to the AdoMet synthase 2 family. Mg(2+) is required as a cofactor.

It catalyses the reaction L-methionine + ATP + H2O = S-adenosyl-L-methionine + phosphate + diphosphate. Its pathway is amino-acid biosynthesis; S-adenosyl-L-methionine biosynthesis; S-adenosyl-L-methionine from L-methionine: step 1/1. Its function is as follows. Catalyzes the formation of S-adenosylmethionine from methionine and ATP. The polypeptide is S-adenosylmethionine synthase (Methanospirillum hungatei JF-1 (strain ATCC 27890 / DSM 864 / NBRC 100397 / JF-1)).